The sequence spans 226 residues: Teichuronic acid biosynthesis protein TuaF (226 aa).

2 helical membrane-spanning segments follow: residues 15–35 and 202–222; these read NIIW…ILPS and VLGV…PEFF.

The protein resides in the cell membrane. It participates in cell wall biogenesis; teichuronic acid biosynthesis. This Bacillus subtilis (strain 168) protein is Teichuronic acid biosynthesis protein TuaF (tuaF).